The following is a 281-amino-acid chain: Leukocyte antigen CD37 (281 aa).

Residues 1-17 (MSAQESCLSLIKYFLFV) are Cytoplasmic-facing. The helical transmembrane segment at 18 to 38 (FNLFFFVLGSLIFCFGIWILI) threads the bilayer. Residues 39-59 (DKTSFVSFVGLAFVPLQIWSK) lie on the Extracellular side of the membrane. Residues 60–74 (VLAISGIFTMGIALL) traverse the membrane as a helical segment. Residues 75–85 (GCVGALKELRC) are Cytoplasmic-facing. Residues 86–111 (LLGLYFGMLLLLFATQITLGILISTQ) form a helical membrane-spanning segment. Residues 112–241 (RAQLERSLRD…QGLQKWLHNN (130 aa)) lie on the Extracellular side of the membrane. N-linked (GlcNAc...) asparagine glycans are attached at residues Asn-170, Asn-183, and Asn-188. Residues 242–266 (LISIVGICLGVGLLELGFMTLSIFL) traverse the membrane as a helical segment. The Cytoplasmic portion of the chain corresponds to 267–281 (CRNLDHVYNRLARYR).

Belongs to the tetraspanin (TM4SF) family. As to quaternary structure, interacts with SCIMP. Interacts with SOCS3. Interacts with DECTIN1/CLEC7A. Post-translationally, tyrosine phosphorylated; leading to activation of downstream signaling pathways. B-lymphocytes. Antigen presenting cells.

It localises to the cell membrane. In terms of biological role, structural component of specialized membrane microdomains known as tetraspanin-enriched microdomains (TERMs), which act as platforms for receptor clustering and signaling. Participates thereby in diverse biological functions such as cell signal transduction, adhesion, migration and protein trafficking. Upon ligand binding, two signaling pathways are activated, one acting through phosphorylation by LYN leading to cell death or a survival pathway with activation of GSK3B. Plays an essential role essential for clustering of integrin ITGA4/ITGB1 and promotes its mobility in the plasma membrane of B-cells. In turn, participates in ITGA4/ITGB1 integrin-mediated antiapoptotic signaling through AKT. Also plays a role in the migration of dendritic cells and neutrophils to draining lymph nodes, as well as in their integrin-mediated adhesion. Negatively regulates IL-6 responses through direct interaction with SOCS3 thereby preventing constitutive IL-6 signaling. Alternatively, inhibition of IL-6 signaling can also occur via interaction and stabilization of DECTIN1/CLEC7A at the cell membrane to inhibit its ability to promote the production of IL-6. The chain is Leukocyte antigen CD37 (CD37) from Homo sapiens (Human).